We begin with the raw amino-acid sequence, 570 residues long: Proline--tRNA ligase (570 aa).

The protein belongs to the class-II aminoacyl-tRNA synthetase family. ProS type 1 subfamily. Homodimer.

The protein resides in the cytoplasm. It carries out the reaction tRNA(Pro) + L-proline + ATP = L-prolyl-tRNA(Pro) + AMP + diphosphate. Functionally, catalyzes the attachment of proline to tRNA(Pro) in a two-step reaction: proline is first activated by ATP to form Pro-AMP and then transferred to the acceptor end of tRNA(Pro). As ProRS can inadvertently accommodate and process non-cognate amino acids such as alanine and cysteine, to avoid such errors it has two additional distinct editing activities against alanine. One activity is designated as 'pretransfer' editing and involves the tRNA(Pro)-independent hydrolysis of activated Ala-AMP. The other activity is designated 'posttransfer' editing and involves deacylation of mischarged Ala-tRNA(Pro). The misacylated Cys-tRNA(Pro) is not edited by ProRS. This Neisseria meningitidis serogroup C / serotype 2a (strain ATCC 700532 / DSM 15464 / FAM18) protein is Proline--tRNA ligase.